Reading from the N-terminus, the 110-residue chain is Nucleotide-binding protein in fmt 3'region (110 aa).

8 to 15 (GLSGAGKT) contacts ATP. 57 to 60 (DARA) contributes to the GTP binding site.

It belongs to the RapZ-like family.

Its function is as follows. Displays ATPase and GTPase activities. The protein is Nucleotide-binding protein in fmt 3'region of Thermus thermophilus.